We begin with the raw amino-acid sequence, 348 residues long: MSGEKSSLLLIHPAVTTTPELVESVKKSNVFADSSKLDQFLVNKLNDSSVQLEDEKYSLVYYLTPEKESEIQFPTKLIAVLAQSLRGGGRLFGLSDVYKIDALINGFEVVNSGEQGYHWVKKGTAHTQTAPVALRPKRNTPSGGSKSLPIFAKPSFALPAFKKAEKPKPTGLPTFKKPESPRASVVAEDLDDGDELDGMNEDDSNSDELTASKSKFFDDVAGQDSADSIDEDDLVDDAEKSAITVVTCGKTKTRRRKACKDCTCGLKEAEAQEADAARAAQDRILGKPVKFDEQELTEIDFTIQGKKVGGCGSCSLGDAFRCSGCPYLGLPAFKPGQPISLDTIADDL.

Residues 1-185 are N-terminal SAM-like domain; the sequence is MSGEKSSLLL…KKPESPRASV (185 aa). Disordered regions lie at residues 128 to 148 and 162 to 213; these read QTAP…SKSL and KKAE…TASK. Residues 186-241 form a linker region; it reads VAEDLDDGDELDGMNEDDSNSDELTASKSKFFDDVAGQDSADSIDEDDLVDDAEKS. A compositionally biased stretch (acidic residues) spans 188-206; the sequence is EDLDDGDELDGMNEDDSNS. [2Fe-2S] cluster is bound by residues Cys-248, Cys-259, Cys-262, and Cys-264. A fe-S binding site A region spans residues 248–264; it reads CGKTKTRRRKACKDCTC. Cys-311, Cys-314, Cys-322, and Cys-325 together coordinate [4Fe-4S] cluster. 2 short sequence motifs (cx2C motif) span residues 311-314 and 322-325; these read CGSC and CSGC. The segment at 311–325 is fe-S binding site B; sequence CGSCSLGDAFRCSGC.

This sequence belongs to the anamorsin family. As to quaternary structure, monomer. Interacts with TAH18. Interacts with MIA40. It depends on [2Fe-2S] cluster as a cofactor. Requires [4Fe-4S] cluster as cofactor.

The protein localises to the cytoplasm. It is found in the mitochondrion intermembrane space. Functionally, component of the cytosolic iron-sulfur (Fe-S) protein assembly (CIA) machinery required for the maturation of extramitochondrial Fe-S proteins. Part of an electron transfer chain functioning in an early step of cytosolic Fe-S biogenesis, facilitating the de novo assembly of a [4Fe-4S] cluster on the scaffold complex CFD1-NBP35. Electrons are transferred to DRE2 from NADPH via the FAD- and FMN-containing protein TAH18. TAH18-DRE2 are also required for the assembly of the diferric tyrosyl radical cofactor of ribonucleotide reductase (RNR), probably by providing electrons for reduction during radical cofactor maturation in the catalytic small subunit RNR2. The sequence is that of Fe-S cluster assembly protein DRE2 from Lachancea thermotolerans (strain ATCC 56472 / CBS 6340 / NRRL Y-8284) (Yeast).